The primary structure comprises 217 residues: Non-structural protein NS3 (217 aa).

It belongs to the orbivirus NS3 family.

In terms of biological role, may play a role in the release of virions from infected cells. The polypeptide is Non-structural protein NS3 (Segment-10) (African horse sickness virus 9 (AHSV-9)).